The following is a 149-amino-acid chain: MADQLTEEQIAEFKEAFSLFDKDGDGTITTKELGTVMRSLGQNPTEAELQDMINEVDADGNGTIDFPEFLTMMARKMKDTDSEEEIREAFRVFDKDGNGFISAAELRHVMTNLGEKLTDEEVDEMIREADIDGDGQVNYEEFVTMMTSK.

Ala-2 carries the N-acetylalanine modification. EF-hand domains lie at 8–43, 44–79, 81–116, and 117–149; these read EQIA…LGQN, PTEA…KMKD, DSEE…LGEK, and LTDE…MTSK. The Ca(2+) site is built by Asp-21, Asp-23, Asp-25, Thr-27, Glu-32, Asp-57, Asp-59, Asn-61, Thr-63, Glu-68, Asp-94, Asp-96, Asn-98, and Glu-105. Lys-116 is subject to N6,N6,N6-trimethyllysine. 5 residues coordinate Ca(2+): Asp-130, Asp-132, Asp-134, Gln-136, and Glu-141.

Belongs to the calmodulin family.

Calmodulin mediates the control of a large number of enzymes, ion channels and other proteins by Ca(2+). Among the enzymes to be stimulated by the calmodulin-Ca(2+) complex are a number of protein kinases and phosphatases. The polypeptide is Calmodulin-1 (Branchiostoma floridae (Florida lancelet)).